The chain runs to 210 residues: MTGLFITLEGPEGAGKSTNREYLAERLRAAGIEVLLTREPGGTPLAERIRDVLLTPVEEVMNADTELLLVFAARAQHLATVIRPALERGAVVLCDRFTDSTYAYQGAGRGLSLARIAALEDFVQGELRPDLTLVFDLPVDVGLARASARGRLDRFEQEGQAFFQKVREAFLARAAAAPQRYVLVDAAQPLAQVQQSLDSLLPQLLERARG.

10–17 (GPEGAGKS) contacts ATP.

This sequence belongs to the thymidylate kinase family.

It carries out the reaction dTMP + ATP = dTDP + ADP. Its function is as follows. Phosphorylation of dTMP to form dTDP in both de novo and salvage pathways of dTTP synthesis. This is Thymidylate kinase from Pseudomonas fluorescens (strain ATCC BAA-477 / NRRL B-23932 / Pf-5).